The following is a 473-amino-acid chain: GTPase Der (473 aa).

EngA-type G domains follow at residues 3-166 (PVIA…ENPE) and 177-350 (IRIG…ESAM). GTP contacts are provided by residues 9–16 (GRPNVGKS), 56–60 (DTGGL), 118–121 (NKTD), 183–190 (GRPNVGKS), 230–234 (DTAGV), and 295–298 (NKWD). Residues 351–435 (SKWPTNRLTA…PIRFEFKSGE (85 aa)) form the KH-like domain. A compositionally biased stretch (basic and acidic residues) spans 444–458 (RLTPRQKVKKDNDLK). The disordered stretch occupies residues 444–473 (RLTPRQKVKKDNDLKKGRRIKKTRQKSVKR). Positions 459–473 (KGRRIKKTRQKSVKR) are enriched in basic residues.

The protein belongs to the TRAFAC class TrmE-Era-EngA-EngB-Septin-like GTPase superfamily. EngA (Der) GTPase family. Associates with the 50S ribosomal subunit.

GTPase that plays an essential role in the late steps of ribosome biogenesis. The protein is GTPase Der of Marinobacter nauticus (strain ATCC 700491 / DSM 11845 / VT8) (Marinobacter aquaeolei).